The following is a 222-amino-acid chain: Phosphoribosylformylglycinamidine synthase subunit PurQ (222 aa).

One can recognise a Glutamine amidotransferase type-1 domain in the interval 3–222 (AAVVVFPGSN…RALTGALAAV (220 aa)). Cysteine 86 serves as the catalytic Nucleophile. Residues histidine 194 and glutamate 196 contribute to the active site.

In terms of assembly, part of the FGAM synthase complex composed of 1 PurL, 1 PurQ and 2 PurS subunits.

Its subcellular location is the cytoplasm. It carries out the reaction N(2)-formyl-N(1)-(5-phospho-beta-D-ribosyl)glycinamide + L-glutamine + ATP + H2O = 2-formamido-N(1)-(5-O-phospho-beta-D-ribosyl)acetamidine + L-glutamate + ADP + phosphate + H(+). The enzyme catalyses L-glutamine + H2O = L-glutamate + NH4(+). The protein operates within purine metabolism; IMP biosynthesis via de novo pathway; 5-amino-1-(5-phospho-D-ribosyl)imidazole from N(2)-formyl-N(1)-(5-phospho-D-ribosyl)glycinamide: step 1/2. In terms of biological role, part of the phosphoribosylformylglycinamidine synthase complex involved in the purines biosynthetic pathway. Catalyzes the ATP-dependent conversion of formylglycinamide ribonucleotide (FGAR) and glutamine to yield formylglycinamidine ribonucleotide (FGAM) and glutamate. The FGAM synthase complex is composed of three subunits. PurQ produces an ammonia molecule by converting glutamine to glutamate. PurL transfers the ammonia molecule to FGAR to form FGAM in an ATP-dependent manner. PurS interacts with PurQ and PurL and is thought to assist in the transfer of the ammonia molecule from PurQ to PurL. In Roseobacter denitrificans (strain ATCC 33942 / OCh 114) (Erythrobacter sp. (strain OCh 114)), this protein is Phosphoribosylformylglycinamidine synthase subunit PurQ.